Consider the following 2896-residue polypeptide: 3'-5' exoribonuclease HELZ2 (2896 aa).

2 C3H1-type zinc fingers span residues 90–114 (VCHYYSPGLGCRRHRNRCTFARSRE) and 217–246 (GQPPAYCRFVGRGQPCWRGESRCQFAHSAV). Residues 287 to 311 (LYCPACLVTCHSQEAFENHCASSEH) form a C2H2-type; atypical zinc finger. The C3H1-type 3 zinc-finger motif lies at 327 to 357 (SPPPGLSKFELCPKPDLCEYGDACTKAHSAQ). The UvrD-like helicase ATP-binding domain maps to 770–1126 (VALIAGWGPG…VVLSTVHTCQ (357 aa)). 791–798 (GPFGTGKT) contributes to the ATP binding site. The segment at 810–1306 (RRPETKVLIC…ESTEAEDAEA (497 aa)) is interaction with THRAP3. The DEAA box signature appears at 914–917 (DEAA). Ser1253 bears the Phosphoserine mark. 3 short sequence motifs (LXXLL motif) span residues 1322–1326 (LRELL), 1365–1369 (LRKLL), and 1420–1424 (LVQLL). The 358-residue stretch at 1581 to 1938 (REDCRAFLTF…VLQRQILLAL (358 aa)) folds into the RNB domain. Residues 2259-2263 (LEGLP) carry the LXXLL motif 4 motif. The interaction with THRAP3 stretch occupies residues 2382-2896 (PSRFLERQTY…RVCRRPTMPS (515 aa)). One can recognise a UvrD-like helicase ATP-binding 2 domain in the interval 2400–2675 (LNPSQNVAVR…HMLDTQYRMH (276 aa)). ATP is bound at residue 2421–2428 (GPPGTGKT). An LXXLL motif 5 motif is present at residues 2476–2480 (LAGLL).

The protein belongs to the DNA2/NAM7 helicase family. As to quaternary structure, interacts with PPARA (via DNA-binding domain) and PPARG; the interaction stimulates the transcriptional activity of PPARA and PPARG. Interacts with THRAP3; the interaction is direct and HELZ2 and THRAP3 synergistically enhance the transcriptional activity of PPARG. It is probably part of the peroxisome proliferator activated receptor alpha interacting complex (PRIC). In terms of tissue distribution, expressed in various tissues including heart, pancreas, skeletal muscle, colon, spleen, liver, kidney, lung, peripheral blood and placenta.

The protein resides in the cytoplasm. It carries out the reaction Exonucleolytic cleavage in the 3'- to 5'-direction to yield nucleoside 5'-phosphates.. The enzyme catalyses ATP + H2O = ADP + phosphate + H(+). In terms of biological role, can degrade highly structured RNAs through its concerted ATP-dependent RNA helicase and 3' to 5' exoribonuclease activities. Shows a strong preference for pyrimidine over purine residues for its nuclease activity. Acts as a transcriptional coactivator for a number of nuclear receptors including PPARA, PPARG, THRA, THRB and RXRA. This Homo sapiens (Human) protein is 3'-5' exoribonuclease HELZ2.